We begin with the raw amino-acid sequence, 607 residues long: MPRKKPFSVKQKKKQLQDKRERKRGLQDGLRSSSNSRSGSRERREEQTDTSDGESVTHHIRRLNQQPSQGLGPRGYDPNRYRLHFERDSREEVERRKRAAREQVLQPVSAEVLELDIREVYQPGSVLDFPRRPPWSYEMSKEQLMSQEERSFQDYLGKIHGAYSSEKLSYFEHNLETWRQLWRVLEMSDIVLLITDIRHPVVNFPPALYEYVTGELGLALVLVLNKVDLAPPALVVAWKHYFHQHYPQLHVVLFTSFPRDPRTPQDPSSVLKKSRRRGRGWTRALGPEQLLRACEAITVGKVDLSSWREKIARDVAGATWGNGSGEEEEEEDGPAVLVEQQTDSAMEPTGPTRERYKDGVVTIGCVGFPNVGKSSLINGLVGRKVVSVSRTPGHTRYFQTYFLTPSVKLCDCPGLIFPSLLPRQLQVLAGIYPIAQIQEPYTAVGYLASRIPVQALLHLRHPEAEDPSAEHPWCAWDICEAWAEKRGYKTAKAARNDVYRAANSLLRLAVDGRLSLCFHPPGYSEQKGTWESHPETTELVVLQGRVGPAGDEEEEEEEELSSSCEEEGEEDRDADEEGEGDEETPTSAPGSSLAGRNPYALLGEDEC.

A compositionally biased stretch (basic residues) spans methionine 1–lysine 14. Residues methionine 1–tyrosine 81 are disordered. The segment covering glutamine 15 to leucine 26 has biased composition (basic and acidic residues). A phosphoserine mark is found at serine 32, serine 33, and serine 34. A phosphothreonine mark is found at threonine 48 and threonine 50. Phosphoserine is present on residues serine 51 and serine 68. The region spanning tryptophan 178 to proline 418 is the CP-type G domain. Asparagine 225–aspartate 228 is a GTP binding site. Position 324 is a phosphoserine (serine 324). Residues glycine 367 to serine 374 and aspartate 411 to leucine 415 contribute to the GTP site. A disordered region spans residues glycine 547–cysteine 607. Residues glycine 550–threonine 584 are compositionally biased toward acidic residues. Residues serine 561, serine 562, and serine 563 each carry the phosphoserine modification.

The protein belongs to the TRAFAC class YlqF/YawG GTPase family.

Its function is as follows. Possible regulatory or functional link with the histocompatibility cluster. The chain is Guanine nucleotide-binding protein-like 1 (GNL1) from Pan troglodytes (Chimpanzee).